A 406-amino-acid chain; its full sequence is Putative 12-oxophytodienoate reductase 12 (406 aa).

Residues 41–43 (PLT), A74, and Q119 each bind FMN. Residue 188–191 (HAAN) participates in substrate binding. FMN-binding positions include R240, G317, and 338–339 (GR).

This sequence belongs to the NADH:flavin oxidoreductase/NADH oxidase family. The cofactor is FMN.

Functionally, putative oxophytodienoate reductase that may be involved in the biosynthesis or metabolism of oxylipin signaling molecules. The polypeptide is Putative 12-oxophytodienoate reductase 12 (OPR12) (Oryza sativa subsp. japonica (Rice)).